Consider the following 209-residue polypeptide: Ribosomal RNA small subunit methyltransferase G (209 aa).

Residues Gly71, Phe76, 122–123 (AE), and Arg135 each bind S-adenosyl-L-methionine.

This sequence belongs to the methyltransferase superfamily. RNA methyltransferase RsmG family.

The protein resides in the cytoplasm. Functionally, specifically methylates the N7 position of a guanine in 16S rRNA. The sequence is that of Ribosomal RNA small subunit methyltransferase G from Flavobacterium johnsoniae (strain ATCC 17061 / DSM 2064 / JCM 8514 / BCRC 14874 / CCUG 350202 / NBRC 14942 / NCIMB 11054 / UW101) (Cytophaga johnsonae).